Consider the following 72-residue polypeptide: uncharacterized protein (72 aa).

The disordered stretch occupies residues 1 to 53 (MTNEPSTSTPTSTSTSTSTSTSTSTTTLTSTSSTPTSTSTSTSTSTSTSTSTS).

This is an uncharacterized protein from Dictyostelium discoideum (Social amoeba).